The primary structure comprises 530 residues: Bifunctional purine biosynthesis protein PurH (530 aa).

The MGS-like domain maps to 1-148 (MNNARPIRRA…KNHKDVTIVV (148 aa)).

It belongs to the PurH family.

The catalysed reaction is (6R)-10-formyltetrahydrofolate + 5-amino-1-(5-phospho-beta-D-ribosyl)imidazole-4-carboxamide = 5-formamido-1-(5-phospho-D-ribosyl)imidazole-4-carboxamide + (6S)-5,6,7,8-tetrahydrofolate. It carries out the reaction IMP + H2O = 5-formamido-1-(5-phospho-D-ribosyl)imidazole-4-carboxamide. It participates in purine metabolism; IMP biosynthesis via de novo pathway; 5-formamido-1-(5-phospho-D-ribosyl)imidazole-4-carboxamide from 5-amino-1-(5-phospho-D-ribosyl)imidazole-4-carboxamide (10-formyl THF route): step 1/1. The protein operates within purine metabolism; IMP biosynthesis via de novo pathway; IMP from 5-formamido-1-(5-phospho-D-ribosyl)imidazole-4-carboxamide: step 1/1. The protein is Bifunctional purine biosynthesis protein PurH of Vibrio vulnificus (strain YJ016).